A 112-amino-acid chain; its full sequence is MPQIVILPHADHCPEGAVFEAKPGETILDAALRNGIEIEHACEKSCACTTCHVIVREGLDSMEPSDELEDDMLDKAWGLEPDSRLSCQAVVADEDLVVEIPKYTINQVSEGH.

A 2Fe-2S ferredoxin-type domain is found at 1 to 104 (MPQIVILPHA…DLVVEIPKYT (104 aa)). The [2Fe-2S] cluster site is built by C42, C48, C51, and C87.

This sequence belongs to the adrenodoxin/putidaredoxin family. Requires [2Fe-2S] cluster as cofactor.

Ferredoxin are iron-sulfur proteins that transfer electrons in a wide variety of metabolic reactions. This chain is 2Fe-2S ferredoxin (fdx), found in Pseudomonas aeruginosa (strain ATCC 15692 / DSM 22644 / CIP 104116 / JCM 14847 / LMG 12228 / 1C / PRS 101 / PAO1).